The sequence spans 216 residues: Octanoyltransferase (216 aa).

The BPL/LPL catalytic domain maps to 32-207; that stretch reads PDSQDEIWLV…QLVKHLDYAE (176 aa). Residues 71 to 78, 138 to 140, and 151 to 153 contribute to the substrate site; these read RGGQVTYH, SLG, and GLA. Residue C169 is the Acyl-thioester intermediate of the active site.

It belongs to the LipB family.

It localises to the cytoplasm. The catalysed reaction is octanoyl-[ACP] + L-lysyl-[protein] = N(6)-octanoyl-L-lysyl-[protein] + holo-[ACP] + H(+). Its pathway is protein modification; protein lipoylation via endogenous pathway; protein N(6)-(lipoyl)lysine from octanoyl-[acyl-carrier-protein]: step 1/2. Functionally, catalyzes the transfer of endogenously produced octanoic acid from octanoyl-acyl-carrier-protein onto the lipoyl domains of lipoate-dependent enzymes. Lipoyl-ACP can also act as a substrate although octanoyl-ACP is likely to be the physiological substrate. This is Octanoyltransferase from Pseudomonas putida (strain ATCC 47054 / DSM 6125 / CFBP 8728 / NCIMB 11950 / KT2440).